The chain runs to 183 residues: Ubiquitin-conjugating enzyme E2 H (183 aa).

Residues 1 to 150 (MSSPSPGKRR…IKEYIQKYAT (150 aa)) enclose the UBC core domain. Lys-60 is modified (N6-acetyllysine). Residue Cys-87 is the Glycyl thioester intermediate of the active site. Positions 152 to 183 (EALKEQEEGTGDSSSESSMSDFSEDEAQDMEL) are disordered. A compositionally biased stretch (low complexity) spans 163–172 (DSSSESSMSD). The segment covering 173 to 183 (FSEDEAQDMEL) has biased composition (acidic residues).

It belongs to the ubiquitin-conjugating enzyme family. As to quaternary structure, interacts with MAEA and WDR26, components of the CTLH complex that contains GID4, RANBP9 and/or RANBP10, MKLN1, MAEA, RMND5A (or alternatively its paralog RMND5B), GID8, ARMC8, WDR26 and YPEL5. In terms of processing, autoubiquitinated in vitro in the presence of NEDD4L.

It catalyses the reaction S-ubiquitinyl-[E1 ubiquitin-activating enzyme]-L-cysteine + [E2 ubiquitin-conjugating enzyme]-L-cysteine = [E1 ubiquitin-activating enzyme]-L-cysteine + S-ubiquitinyl-[E2 ubiquitin-conjugating enzyme]-L-cysteine.. The catalysed reaction is S-ubiquitinyl-[E1 ubiquitin-activating enzyme]-L-cysteine + [acceptor protein]-L-lysine = [E1 ubiquitin-activating enzyme]-L-cysteine + N(6)-monoubiquitinyl-[acceptor protein]-L-lysine.. The protein operates within protein modification; protein ubiquitination. Accepts ubiquitin from the E1 complex and catalyzes its covalent attachment to other proteins. E2 ubiquitin conjugating enzyme that transfers ubiquitin to MAEA, a core component of the CTLH E3 ubiquitin-protein ligase complex. In vitro catalyzes 'Lys-11'- and 'Lys-48'-linked polyubiquitination. Capable, in vitro, to ubiquitinate histone H2A. This is Ubiquitin-conjugating enzyme E2 H (UBE2H) from Homo sapiens (Human).